The sequence spans 152 residues: Cytochrome c-type biogenesis CcmH-like mitochondrial protein (152 aa).

Residues 1–83 (MATEEDVKQR…ILYTPKFDLQ (83 aa)) lie on the Mitochondrial intermembrane side of the membrane. The heme site is built by Cys-26 and Cys-29. Residues 84 to 104 (TAAIWLSPVIVGGVAAGVWAY) traverse the membrane as a helical segment. At 105 to 152 (QKHRQRTNVHIMALNLVRGVPLTPREKETMLDVLTPPPPANKWWWPGK) the chain is on the mitochondrial matrix side.

It belongs to the CcmH/CycL/Ccl2/NrfF family.

It is found in the mitochondrion inner membrane. Functionally, plays a role in mitochondrial cytochrome c maturation. Probable component of a heme lyase complex involved in the reduction of apocytochrome c. The protein is Cytochrome c-type biogenesis CcmH-like mitochondrial protein of Oryza sativa subsp. japonica (Rice).